We begin with the raw amino-acid sequence, 317 residues long: MKTIIISDFDETITRVDTICTIAKLPYLLNPRLKPEWGHFTKTYMDGYHKYKYNGTRSLPLLSSGVPTIISQSNFNKLFADELKYQNHNRVVELNSVNEITKQQIFKSISLDQMKTFARDQNHEDCLLRDGFKTFCSSVVKNFESDFYVLSINWSKEFIHEVIGDRRLKNSHIFCNDLKKVSDKCSQSYNGEFDCRLLTGSDKVKILGEILDKIDSGCNKEGNSCSYWYIGDSETDLLSILHPSTNGVLLINPQENPSKFIKITEKIIGIPKDKISSFEADNGPAWLQFCEKEGGKGAYLVKSWDSLKDLIMQVTKM.

The protein belongs to the CTO1 family.

Functionally, protein required for cold tolerance. Plays a role in the regulation of phosphate uptake. In Saccharomyces cerevisiae (strain ATCC 204508 / S288c) (Baker's yeast), this protein is Cold tolerance protein 1.